Here is a 116-residue protein sequence, read N- to C-terminus: Hydrogenase maturation factor HypA (116 aa).

Histidine 2 contributes to the Ni(2+) binding site. Residues cysteine 73, cysteine 76, cysteine 90, and cysteine 93 each coordinate Zn(2+).

It belongs to the HypA/HybF family.

Its function is as follows. Involved in the maturation of [NiFe] hydrogenases. Required for nickel insertion into the metal center of the hydrogenase. The chain is Hydrogenase maturation factor HypA from Escherichia coli O157:H7.